The following is a 648-amino-acid chain: Macrolide export ATP-binding/permease protein MacB (648 aa).

One can recognise an ABC transporter domain in the interval 5–243 (LELKDIRRSY…AGGTEPVVNT (239 aa)). Residue 41-48 (GASGSGKS) coordinates ATP. The next 4 membrane-spanning stretches (helical) occupy residues 273-293 (LLTMLGIIIGIASVVSIVVVG), 523-543 (LFMTLVAVISLVVGGIGVMNI), 576-596 (AVLVCLVGGALGITLSLLIAF), and 611-631 (PLALLLAFLCSTVTGILFGWL).

The protein belongs to the ABC transporter superfamily. Macrolide exporter (TC 3.A.1.122) family. Homodimer. Part of the tripartite efflux system MacAB-TolC, which is composed of an inner membrane transporter, MacB, a periplasmic membrane fusion protein, MacA, and an outer membrane component, TolC. The complex forms a large protein conduit and can translocate molecules across both the inner and outer membranes. Interacts with MacA.

It localises to the cell inner membrane. Functionally, part of the tripartite efflux system MacAB-TolC. MacB is a non-canonical ABC transporter that contains transmembrane domains (TMD), which form a pore in the inner membrane, and an ATP-binding domain (NBD), which is responsible for energy generation. Confers resistance against macrolides. The protein is Macrolide export ATP-binding/permease protein MacB of Escherichia coli O157:H7.